Reading from the N-terminus, the 794-residue chain is Zinc finger protein 148 (794 aa).

Residue K6 forms a Glycyl lysine isopeptide (Lys-Gly) (interchain with G-Cter in SUMO2) linkage. A Phosphoserine modification is found at S51. Glycyl lysine isopeptide (Lys-Gly) (interchain with G-Cter in SUMO2) cross-links involve residues K88, K115, and K132. The C2H2-type 1 zinc-finger motif lies at 171 to 193; sequence HVCEHCNAAFRTNYHLQRHVFIH. Phosphothreonine is present on T194. 2 C2H2-type zinc fingers span residues 199–221 and 227–249; these read FQCSQCDMRFIQKYLLQRHEKIH and FRCDECGMRFIQKYHMERHKRTH. S250 is subject to Phosphoserine. The C2H2-type 4 zinc-finger motif lies at 255–278; it reads YQCEYCLQYFSRTDRVLKHKRMCH. Residue K291 forms a Glycyl lysine isopeptide (Lys-Gly) (interchain with G-Cter in SUMO2) linkage. Positions 298–338 are disordered; sequence EEDSGFSTSPKDNSLPKKKRQKTEKKSSGMDKESSLDKSDL. Residues S301 and S306 each carry the phosphoserine modification. A Glycyl lysine isopeptide (Lys-Gly) (interchain with G-Cter in SUMO2) cross-link involves residue K308. Residues 321-338 are compositionally biased toward basic and acidic residues; sequence EKKSSGMDKESSLDKSDL. Residue K356 forms a Glycyl lysine isopeptide (Lys-Gly) (interchain with G-Cter in SUMO1); alternate linkage. A Glycyl lysine isopeptide (Lys-Gly) (interchain with G-Cter in SUMO2); alternate cross-link involves residue K356. A Glycyl lysine isopeptide (Lys-Gly) (interchain with G-Cter in SUMO2) cross-link involves residue K402. S412 bears the Phosphoserine mark. Glycyl lysine isopeptide (Lys-Gly) (interchain with G-Cter in SUMO2) cross-links involve residues K421 and K424. Residues 575–588 show a composition bias toward polar residues; it reads SSEVPEVTQSENVG. The tract at residues 575 to 596 is disordered; sequence SSEVPEVTQSENVGSSSQASSS. K607 carries the N6-acetyllysine modification. S665 and S784 each carry phosphoserine. The disordered stretch occupies residues 775-794; sequence NDNRAGMTSSPDATTGQTFG.

This sequence belongs to the krueppel C2H2-type zinc-finger protein family. As to quaternary structure, interacts with HNRNPDL. Interacts with the 5FMC complex; the interaction requires association with CHTOP. Interacts with CAVIN1. Sumoylated with SUMO2. Desumoylated by SENP3, resulting in the stimulation of transcription of its target genes.

Its subcellular location is the nucleus. Functionally, involved in transcriptional regulation. Represses the transcription of a number of genes including gastrin, stromelysin and enolase. Binds to the G-rich box in the enhancer region of these genes. The protein is Zinc finger protein 148 (ZNF148) of Bos taurus (Bovine).